An 873-amino-acid chain; its full sequence is Tyrosine-protein kinase transforming protein Fps (873 aa).

The segment at 1-46 (ASGQLHRPQPQEHTSTSAAAGTWRLTQASESRHRLPHCSAAPSHQD) is disordered. Positions 11–29 (QEHTSTSAAAGTWRLTQAS) are enriched in polar residues. One can recognise an F-BAR domain in the interval 50–313 (MGFGPELWCP…AVEMIDPATE (264 aa)). The interval 445-471 (GSEEPPPALPLQEDRQSARSTDQERSG) is disordered. Over residues 456–469 (QEDRQSARSTDQER) the composition is skewed to basic and acidic residues. An SH2 domain is found at 511–600 (WYHGAIPRSE…KSGIVLTRAV (90 aa)). The 254-residue stretch at 612–865 (VLLGERIGRG…PSFGAVHQDL (254 aa)) folds into the Protein kinase domain. Residues 618 to 626 (IGRGNFGEV) and lysine 641 each bind ATP. Aspartate 734 functions as the Proton acceptor in the catalytic mechanism. A Phosphotyrosine; by autocatalysis modification is found at tyrosine 764.

It belongs to the protein kinase superfamily. Tyr protein kinase family. Fes/fps subfamily.

The enzyme catalyses L-tyrosyl-[protein] + ATP = O-phospho-L-tyrosyl-[protein] + ADP + H(+). The chain is Tyrosine-protein kinase transforming protein Fps (V-FPS) from Gallus gallus (Chicken).